The following is a 215-amino-acid chain: Methylthioribulose-1-phosphate dehydratase (215 aa).

Residues H103 and H105 each coordinate Zn(2+).

The protein belongs to the aldolase class II family. MtnB subfamily. The cofactor is Zn(2+).

The enzyme catalyses 5-(methylsulfanyl)-D-ribulose 1-phosphate = 5-methylsulfanyl-2,3-dioxopentyl phosphate + H2O. It participates in amino-acid biosynthesis; L-methionine biosynthesis via salvage pathway; L-methionine from S-methyl-5-thio-alpha-D-ribose 1-phosphate: step 2/6. Catalyzes the dehydration of methylthioribulose-1-phosphate (MTRu-1-P) into 2,3-diketo-5-methylthiopentyl-1-phosphate (DK-MTP-1-P). The polypeptide is Methylthioribulose-1-phosphate dehydratase (Sulfurihydrogenibium sp. (strain YO3AOP1)).